Reading from the N-terminus, the 1358-residue chain is Xanthine dehydrogenase (1358 aa).

In terms of domain architecture, 2Fe-2S ferredoxin-type spans 18–107; it reads NQLLFFLNGE…GMAVTTIEGL (90 aa). Positions 56, 61, 64, 89, 129, 132, 164, and 166 each coordinate [2Fe-2S] cluster. One can recognise an FAD-binding PCMH-type domain in the interval 253 to 447; sequence FTGSRVTWYT…ESVFIPYTRP (195 aa). Residues 281–288, F366, 376–380, D389, L437, and K455 each bind FAD; these read IVVGNTEI and SIGGN. Q805 and F836 together coordinate Mo-molybdopterin. The substrate site is built by E840 and R918. R950 is a binding site for Mo-molybdopterin. Substrate-binding residues include Y952 and T1048. Residue A1117 participates in Mo-molybdopterin binding. Catalysis depends on E1302, which acts as the Proton acceptor.

It belongs to the xanthine dehydrogenase family. As to quaternary structure, homodimer. Requires FAD as cofactor. Mo-molybdopterin serves as cofactor. [2Fe-2S] cluster is required as a cofactor.

It is found in the peroxisome. The enzyme catalyses xanthine + NAD(+) + H2O = urate + NADH + H(+). It catalyses the reaction hypoxanthine + NAD(+) + H2O = xanthine + NADH + H(+). In terms of biological role, key enzyme in purine degradation. Catalyzes the oxidation of hypoxanthine to xanthine. Catalyzes the oxidation of xanthine to uric acid. The sequence is that of Xanthine dehydrogenase (xdh) from Dictyostelium discoideum (Social amoeba).